We begin with the raw amino-acid sequence, 440 residues long: R3H and coiled-coil domain-containing protein 1 (440 aa).

An R3H domain is found at 16–81 (NDFVHRIQEE…KRRTVICHQD (66 aa)). The segment at 154–225 (TSVLKREAPA…LGPESQSGKG (72 aa)) is disordered. Basic and acidic residues predominate over residues 157–168 (LKREAPAGRDPE). Serine 236 is subject to Phosphoserine. A coiled-coil region spans residues 242–300 (LEKGKESLLEKRLVAEEEEDEEEVEEDGPSSCSEDDYSELLQEITDNLTKKEIQIEKIH). Residues 254–276 (LVAEEEEDEEEVEEDGPSSCSED) form a disordered region. The span at 257–276 (EEEEDEEEVEEDGPSSCSED) shows a compositional bias: acidic residues.

This is R3H and coiled-coil domain-containing protein 1 from Homo sapiens (Human).